The sequence spans 662 residues: FAST kinase domain-containing protein 3, mitochondrial (662 aa).

The region spanning 591–649 is the RAP domain; the sequence is IALCIDGPKRFCSNSKHLLGKEAIKQRHLQLLGYQVVQIPYHEIGMLKSRRELVEYLQR.

The protein belongs to the FAST kinase family. In terms of tissue distribution, expression detected in spleen, thymus, testis, ovary, colon, heart, smooth muscle, kidney, brain, lung, liver and white adipose tissue with highest expression in liver and thyroid.

It is found in the mitochondrion. Functionally, required for normal mitochondrial respiration. Increases steady-state levels and half-lives of a subset of mature mitochondrial mRNAs MT-ND2, MT-ND3, MT-CYTB, MT-CO2, and MT-ATP8/6. Promotes MT-CO1 mRNA translation and increases mitochondrial complex IV assembly and activity. This Homo sapiens (Human) protein is FAST kinase domain-containing protein 3, mitochondrial (FASTKD3).